The following is a 386-amino-acid chain: 3-ketoacyl-CoA thiolase (386 aa).

The active-site Acyl-thioester intermediate is the Cys91. Catalysis depends on proton acceptor residues His342 and Cys372.

This sequence belongs to the thiolase-like superfamily. Thiolase family. As to quaternary structure, heterotetramer of two alpha chains (FadB) and two beta chains (FadA).

It is found in the cytoplasm. It catalyses the reaction an acyl-CoA + acetyl-CoA = a 3-oxoacyl-CoA + CoA. It participates in lipid metabolism; fatty acid beta-oxidation. Its function is as follows. Catalyzes the final step of fatty acid oxidation in which acetyl-CoA is released and the CoA ester of a fatty acid two carbons shorter is formed. This Pseudoalteromonas atlantica (strain T6c / ATCC BAA-1087) protein is 3-ketoacyl-CoA thiolase.